A 300-amino-acid chain; its full sequence is NAD kinase (300 aa).

Asp75 serves as the catalytic Proton acceptor. Residues 75–76 (DG), 149–150 (ND), Arg177, Asp179, 190–195 (TAYALS), Ala214, and Gln248 contribute to the NAD(+) site.

Belongs to the NAD kinase family. Requires a divalent metal cation as cofactor.

The protein localises to the cytoplasm. It catalyses the reaction NAD(+) + ATP = ADP + NADP(+) + H(+). Its function is as follows. Involved in the regulation of the intracellular balance of NAD and NADP, and is a key enzyme in the biosynthesis of NADP. Catalyzes specifically the phosphorylation on 2'-hydroxyl of the adenosine moiety of NAD to yield NADP. This chain is NAD kinase, found in Burkholderia vietnamiensis (strain G4 / LMG 22486) (Burkholderia cepacia (strain R1808)).